We begin with the raw amino-acid sequence, 172 residues long: Protein-export protein SecB (172 aa).

Belongs to the SecB family. In terms of assembly, homotetramer, a dimer of dimers. One homotetramer interacts with 1 SecA dimer.

It localises to the cytoplasm. One of the proteins required for the normal export of preproteins out of the cell cytoplasm. It is a molecular chaperone that binds to a subset of precursor proteins, maintaining them in a translocation-competent state. It also specifically binds to its receptor SecA. The polypeptide is Protein-export protein SecB (Xylella fastidiosa (strain 9a5c)).